The chain runs to 151 residues: Melatonin receptor type 1C (151 aa).

Residues 1–13 (CHSLRYDRLYSRR) are Cytoplasmic-facing. A helical transmembrane segment spans residues 14–34 (NTCLYLLLTWMLTALATVPNF). The Extracellular portion of the chain corresponds to 35–58 (LVGSLKYDPRVFSCTFTQTASSSY). Residues 59-79 (TVCVVLIHFLVPLGVVSFCYL) traverse the membrane as a helical segment. Topologically, residues 80–109 (RIWTLVIRVKGRVRPNPKVRAADLRNFLTM) are cytoplasmic. The helical transmembrane segment at 110–130 (FVVFVLFAVCWAPLNFIGLAV) threads the bilayer. Over 131–143 (AINPAKVAPNIPE) the chain is Extracellular. The chain crosses the membrane as a helical span at residues 144–151 (WLFVTSYF).

It belongs to the G-protein coupled receptor 1 family.

The protein resides in the cell membrane. Functionally, high affinity receptor for melatonin. The activity of this receptor is mediated by pertussis toxin sensitive G proteins that inhibits adenylate cyclase activity. In Danio rerio (Zebrafish), this protein is Melatonin receptor type 1C (mtnr1c).